The following is a 1058-amino-acid chain: Ubiquitin-like modifier-activating enzyme 1 (1058 aa).

The interval 1–46 is disordered; it reads MSSSPLSKKRRVSGPDPKPGSNCSSAQSVLSEVSSVPTNGMAKNGS. An N-acetylserine modification is found at S2. S4, S13, S21, S24, and S46 each carry phosphoserine. A compositionally biased stretch (low complexity) spans 24 to 36; that stretch reads SSAQSVLSEVSSV. Y55 carries the post-translational modification Phosphotyrosine. A run of 2 repeats spans residues 63-199 and 459-611. Residues 63 to 611 form a 2 approximate repeats region; that stretch reads GHEAMKMLQT…GTKGNVQVVI (549 aa). ATP-binding positions include A478, D504, R515, K528, and 576-577; that span reads DN. K528 carries the post-translational modification N6-succinyllysine. C632 (glycyl thioester intermediate) is an active-site residue. An N6-acetyllysine modification is found at K671. T800 carries the post-translational modification Phosphothreonine. 4 positions are modified to phosphoserine: S810, S816, S820, and S835. Residue K980 is modified to N6-acetyllysine.

The protein belongs to the ubiquitin-activating E1 family. In terms of assembly, monomer. Interacts with GAN (via BTB domain). In terms of processing, ISGylated.

Its subcellular location is the cytoplasm. It localises to the mitochondrion. It is found in the nucleus. The enzyme catalyses ATP + ubiquitin + [E1 ubiquitin-activating enzyme]-L-cysteine = AMP + diphosphate + S-ubiquitinyl-[E1 ubiquitin-activating enzyme]-L-cysteine.. It functions in the pathway protein modification; protein ubiquitination. Functionally, catalyzes the first step in ubiquitin conjugation to mark cellular proteins for degradation through the ubiquitin-proteasome system. Activates ubiquitin by first adenylating its C-terminal glycine residue with ATP, and thereafter linking this residue to the side chain of a cysteine residue in E1, yielding a ubiquitin-E1 thioester and free AMP. Essential for the formation of radiation-induced foci, timely DNA repair and for response to replication stress. Promotes the recruitment of TP53BP1 and BRCA1 at DNA damage sites. This chain is Ubiquitin-like modifier-activating enzyme 1, found in Rattus norvegicus (Rat).